Here is a 347-residue protein sequence, read N- to C-terminus: A-type ATP synthase subunit C (347 aa).

This sequence belongs to the V-ATPase V0D/AC39 subunit family. As to quaternary structure, has multiple subunits with at least A(3), B(3), C, D, E, F, H, I and proteolipid K(x).

The protein resides in the cell membrane. In terms of biological role, component of the A-type ATP synthase that produces ATP from ADP in the presence of a proton gradient across the membrane. The sequence is that of A-type ATP synthase subunit C from Haloquadratum walsbyi (strain DSM 16790 / HBSQ001).